The following is a 978-amino-acid chain: MTTQYMGDSIEDFQVLDLLGKGGFACVYRGRCLATGQEVAIKMIDKKAMRTAGMVNRVCNEVEIHCRLKHPSILELYTYFEDDNYVYLVLELAENGEANRYLRKQGHTLKESEVRRIMLQVVKGVLYLHSHGIIHRDLSLGNILLSSDMDAKIADFGLATRLSLPDEKHYTMCGTPNYISPEIATRDPHGLESDVWSIGCMLFTLLVGKPPFDTEAVRSTLNKVVLAEYDIPNHVSIEARDLISKLLKKNPQDRLTLSGILDHPFITNQTLNTKYSSPTRQHLNPRAYENSLDSGTGTMATISTGHAPFQQDNRHAVKSSSAERTSDIWPRDPKHPPSPPVRQRPSSCPSTENVTTGSSSHVRGSDVAQPAQYSGLKTRTSDSWLSDIHSSKIPKLPQKPLVGLDKMNGIQSKFKSYNATKYSSYYGSTLGDILHLAGQQNGTNTSSSGFYSADTKSYSANHGLKTSSTDHNNKESCQTRDNHMYEKSIEQPSATKSEHSRAYSSQDSRPHSHHKRHGSDSVSKDFDASPQPSQGESRRRQNHRSDSERQTRRAEKSRSGGRDKSLGELTEPLNAERLRPIRQKTRNAVVSITDEAEVCLEFLQQKGGQSIVTEVIRIASNGMKISVYQPSEAEKVLGSEPPLPPSAGNGSYLFPSLPSKYWKKYKYAAKFVQLVRKLTPKVTLYSKHAKCVLMENYPHADFEVCFYNGAKVHQSQECTRIIEPGGVSYTLESVGGIEGVPVEMRKLIQHVKAAYQQCVRLERIIMQEEKESNGNQYFPFIVGRRPPAWKNSSGKSEKQDQQGCSNGQSQPVLPSSPSIAAPAMTSLLSFDGTIASTAQTTNPAFPGKSRKTSPSKTSRHKQSPAQPIPAEVANAKTDPSPHHYVEGSSPIPSAHVCKMAFVDGVGWSSQLTTGEVWIQYTDGSQIIFHAAAAAIKFTDSTGNVTRYGYADRLPSVIKEKLSHLPAVIKTLATTSKVS.

A Protein kinase domain is found at 13–266 (FQVLDLLGKG…LSGILDHPFI (254 aa)). ATP is bound by residues 19–27 (LGKGGFACV) and Lys-42. Asp-137 acts as the Proton acceptor in catalysis. Polar residues-rich tracts occupy residues 271–282 (LNTKYSSPTRQH) and 291–304 (SLDS…TIST). 4 disordered regions span residues 271–381 (LNTK…TRTS), 489–578 (IEQP…AERL), 788–818 (AWKN…SSPS), and 838–869 (AQTT…QPIP). Positions 324-335 (RTSDIWPRDPKH) are enriched in basic and acidic residues. Polar residues-rich tracts occupy residues 351–362 (TENVTTGSSSHV) and 371–381 (AQYSGLKTRTS). 2 stretches are compositionally biased toward basic and acidic residues: residues 518–527 (GSDSVSKDFD) and 536–566 (ESRR…DKSL). The Cryptic POLO box 1 (CPB1) domain maps to 565-678 (SLGELTEPLN…AKFVQLVRKL (114 aa)). One can recognise a Cryptic POLO box 2 (CPB2) domain in the interval 679 to 792 (TPKVTLYSKH…GRRPPAWKNS (114 aa)). Over residues 801-818 (QQGCSNGQSQPVLPSSPS) the composition is skewed to polar residues. A compositionally biased stretch (basic residues) spans 848–862 (KSRKTSPSKTSRHKQ). A POLO box domain is found at 895–973 (HVCKMAFVDG…LPAVIKTLAT (79 aa)).

This sequence belongs to the protein kinase superfamily. Ser/Thr protein kinase family. CDC5/Polo subfamily. Homodimer. In terms of processing, ubiquitinated; leading to its degradation by the proteasome.

The protein resides in the cytoplasm. Its subcellular location is the cytoskeleton. The protein localises to the microtubule organizing center. It localises to the centrosome. It is found in the centriole. It catalyses the reaction L-seryl-[protein] + ATP = O-phospho-L-seryl-[protein] + ADP + H(+). It carries out the reaction L-threonyl-[protein] + ATP = O-phospho-L-threonyl-[protein] + ADP + H(+). Functionally, serine/threonine-protein kinase that plays a central role in centriole duplication. Able to trigger procentriole formation on the surface of the mother centriole cylinder, leading to the recruitment of centriole biogenesis proteins. When overexpressed, it is able to induce centrosome amplification through the simultaneous generation of multiple procentrioles adjoining each parental centriole during S phase. The chain is Serine/threonine-protein kinase PLK4 from Nematostella vectensis (Starlet sea anemone).